A 224-amino-acid chain; its full sequence is MPGGLLLGDVAPNFEANTTVGRIRFHDFLGDSWGILFSHPRDFTPVCTTELGRAAKLAPEFAKRNVKLIALSIDSVEDHLAWSKDINAYNCEEPTEKLPFPIIDDRNRELAILLGMLDPAEKDEKGMPGTARVVFVFGPDKKLKLSILYPATTGRNFDEILRVVISLQLTAEKRVATPVDWKDGDSVMVLPTIPEEEAKKLFPKGVFTKELPSGRKYLRYTPQP.

In terms of domain architecture, Thioredoxin spans 5–169 (LLLGDVAPNF…ILRVVISLQL (165 aa)). The interval 31 to 40 (DSWGILFSHP) is required and sufficient for targeting to lysosomes and lamellar bodies. Thr-44 carries the post-translational modification Phosphothreonine. The active-site Cysteine sulfenic acid (-SOH) intermediate; for peroxidase activity is the Cys-47. Position 63 is an N6-acetyllysine (Lys-63). The residue at position 89 (Tyr-89) is a Phosphotyrosine. The active-site For phospholipase activity is the Asp-140. A Phosphothreonine; by MAPK modification is found at Thr-177. At Lys-209 the chain carries N6-acetyllysine; alternate. Lys-209 bears the N6-succinyllysine; alternate mark.

It belongs to the peroxiredoxin family. Prx6 subfamily. Homodimer. Interacts with GSTP1; mediates PRDX6 glutathionylation and regeneration. Interacts with APEX1. Interacts with STH. May interact with FAM168B. May interact with HTR2A. In terms of processing, irreversibly inactivated by overoxidation of Cys-47 to sulfinic acid (Cys-SO(2)H) and sulfonic acid (Cys-SO(3)H) forms upon oxidative stress. Phosphorylation at Thr-177 by MAP kinases increases the phospholipase activity of the enzyme. The phosphorylated form exhibits a greater lysophosphatidylcholine acyltransferase activity compared to the non-phosphorylated form.

It localises to the cytoplasm. Its subcellular location is the lysosome. It catalyses the reaction a hydroperoxide + 2 glutathione = an alcohol + glutathione disulfide + H2O. It carries out the reaction a 1,2-diacyl-sn-glycero-3-phosphocholine + H2O = a 1-acyl-sn-glycero-3-phosphocholine + a fatty acid + H(+). The catalysed reaction is a 1-acyl-sn-glycero-3-phosphocholine + an acyl-CoA = a 1,2-diacyl-sn-glycero-3-phosphocholine + CoA. The enzyme catalyses 1-hexadecanoyl-sn-glycero-3-phosphocholine + hexadecanoyl-CoA = 1,2-dihexadecanoyl-sn-glycero-3-phosphocholine + CoA. It catalyses the reaction 1,2-dihexadecanoyl-sn-glycero-3-phosphocholine + H2O = 1-hexadecanoyl-sn-glycero-3-phosphocholine + hexadecanoate + H(+). Its function is as follows. Thiol-specific peroxidase that catalyzes the reduction of hydrogen peroxide and organic hydroperoxides to water and alcohols, respectively. Can reduce H(2)O(2) and short chain organic, fatty acid, and phospholipid hydroperoxides. Also has phospholipase activity, and can therefore either reduce the oxidized sn-2 fatty acyl group of phospholipids (peroxidase activity) or hydrolyze the sn-2 ester bond of phospholipids (phospholipase activity). These activities are dependent on binding to phospholipids at acidic pH and to oxidized phospholipds at cytosolic pH. Plays a role in cell protection against oxidative stress by detoxifying peroxides and in phospholipid homeostasis. Exhibits acyl-CoA-dependent lysophospholipid acyltransferase which mediates the conversion of lysophosphatidylcholine (1-acyl-sn-glycero-3-phosphocholine or LPC) into phosphatidylcholine (1,2-diacyl-sn-glycero-3-phosphocholine or PC). Shows a clear preference for LPC as the lysophospholipid and for palmitoyl CoA as the fatty acyl substrate. In Pongo abelii (Sumatran orangutan), this protein is Peroxiredoxin-6 (PRDX6).